We begin with the raw amino-acid sequence, 177 residues long: Adenylate kinase (177 aa).

13–18 (GCGKGT) contacts ATP. An NMP region spans residues 33–62 (SSGDIIREEMKKSSKEATVIREMVNSGRLA). Residues serine 34, arginine 39, 60–62 (RLA), 85–88 (GYPR), and glutamine 92 each bind AMP. The LID stretch occupies residues 119–127 (GRNEGRDDD). Arginine 120 is an ATP binding site. The AMP site is built by arginine 124 and arginine 135.

The protein belongs to the adenylate kinase family. Monomer.

It localises to the cytoplasm. It carries out the reaction AMP + ATP = 2 ADP. Its function is as follows. Catalyzes the reversible transfer of the terminal phosphate group between ATP and AMP. Plays an important role in cellular energy homeostasis and in adenine nucleotide metabolism. The sequence is that of Adenylate kinase from Encephalitozoon cuniculi (strain GB-M1) (Microsporidian parasite).